Consider the following 84-residue polypeptide: Small ribosomal subunit protein bS20 (84 aa).

This sequence belongs to the bacterial ribosomal protein bS20 family.

Functionally, binds directly to 16S ribosomal RNA. In Latilactobacillus sakei subsp. sakei (strain 23K) (Lactobacillus sakei subsp. sakei), this protein is Small ribosomal subunit protein bS20.